Consider the following 247-residue polypeptide: PF03932 family protein CutC (247 aa).

Belongs to the CutC family.

Its subcellular location is the cytoplasm. The protein is PF03932 family protein CutC of Vibrio parahaemolyticus serotype O3:K6 (strain RIMD 2210633).